The chain runs to 74 residues: Conotoxin MiEr93 (74 aa).

Positions 1–22 (MKLTCVLIIAVLFLTAYQLATA) are cleaved as a signal peptide. A propeptide spanning residues 23 to 45 (ASYAKGKQKHRALRPADKHLRLT) is cleaved from the precursor. 3 disulfides stabilise this stretch: C48/C62, C55/C66, and C61/C73.

This sequence belongs to the conotoxin O1 superfamily. Expressed by the venom duct.

The protein localises to the secreted. The sequence is that of Conotoxin MiEr93 from Conus miles (Soldier cone).